The sequence spans 1354 residues: Rho-associated protein kinase 1 (1354 aa).

An N-acetylserine modification is found at Ser2. The region spanning 76–338 (YEVVKVIGRG…VEEIKRHLFF (263 aa)) is the Protein kinase domain. Residues 82–90 (IGRGAFGEV) and Lys105 contribute to the ATP site. Asp198 acts as the Proton acceptor in catalysis. Residues 341–409 (DQWAWETLRD…YSNRRYLPSA (69 aa)) form the AGC-kinase C-terminal domain. An interaction with FHOD1 region spans residues 368 to 727 (FDDLEEDKGD…KKLKEEREAR (360 aa)). Positions 422-692 (KSLQESLQKT…RLEQEVNEHK (271 aa)) form a coiled coil. Residues 479-556 (SAVSQIEKEK…LEEANDLLRT (78 aa)) form the REM-1 domain. Positions 707–946 (EAKSVAMCEM…TVSRLEETNS (240 aa)) are SHROOM3 binding. In terms of domain architecture, RhoBD spans 949 to 1015 (TKDIEMLRKE…LAEIMNRKDF (67 aa)). An RHOA binding region spans residues 998–1010 (LKTQAVNKLAEIM). Residues 1011 to 1102 (NRKDFKIDRK…KLLDLSDSTS (92 aa)) adopt a coiled-coil conformation. Phosphoserine occurs at positions 1105 and 1108. The tract at residues 1115–1354 (NLPESRIEGW…VVKNTSGKTS (240 aa)) is auto-inhibitory. In terms of domain architecture, PH spans 1118-1317 (ESRIEGWLSV…WVTHLVKKIP (200 aa)). Residues 1228–1283 (GHEFIPTLYHFPANCEACAKPLWHVFKPPPALECRRCHVKCHRDHLDKKEDLISPC) form a Phorbol-ester/DAG-type zinc finger. The residue at position 1328 (Ser1328) is a Phosphoserine. Residues 1333–1354 (STRSTANQSFRKVVKNTSGKTS) are disordered.

This sequence belongs to the protein kinase superfamily. AGC Ser/Thr protein kinase family. As to quaternary structure, homodimer. Interacts with RHOA (activated by GTP), RHOB, RHOC, GEM, MYLC2B, RHOE, PPP1R12A, LIMK1, LIMK2, TSG101, CHORDC1, DAPK3, PFN1 and JIP3. Interacts with FHOD1 in a Src-dependent manner. Interacts with PTEN. Interacts with ITGB1BP1 (via N-terminus and PTB domain). Interacts with SHROOM3. Requires Mg(2+) as cofactor. Post-translationally, autophosphorylated on serine and threonine residues. Cleaved by caspase-3 during apoptosis. This leads to constitutive activation of the kinase and membrane blebbing. As to expression, highly expressed in brain, heart, lung, liver, stomach, spleen, kidney, testis, muscle, embryo and placenta.

The protein localises to the cytoplasm. The protein resides in the cytoskeleton. It is found in the microtubule organizing center. It localises to the centrosome. Its subcellular location is the centriole. The protein localises to the golgi apparatus membrane. The protein resides in the cell projection. It is found in the bleb. It localises to the cell membrane. Its subcellular location is the lamellipodium. The protein localises to the ruffle. It catalyses the reaction L-seryl-[protein] + ATP = O-phospho-L-seryl-[protein] + ADP + H(+). The catalysed reaction is L-threonyl-[protein] + ATP = O-phospho-L-threonyl-[protein] + ADP + H(+). Activated by RHOA binding. Inhibited by Y-27632. Its function is as follows. Protein kinase which is a key regulator of the actin cytoskeleton and cell polarity. Involved in regulation of smooth muscle contraction, actin cytoskeleton organization, stress fiber and focal adhesion formation, neurite retraction, cell adhesion and motility via phosphorylation of DAPK3, GFAP, LIMK1, LIMK2, MYL9/MLC2, TPPP, PFN1 and PPP1R12A. Phosphorylates FHOD1 and acts synergistically with it to promote SRC-dependent non-apoptotic plasma membrane blebbing. Phosphorylates JIP3 and regulates the recruitment of JNK to JIP3 upon UVB-induced stress. Acts as a suppressor of inflammatory cell migration by regulating PTEN phosphorylation and stability. Acts as a negative regulator of VEGF-induced angiogenic endothelial cell activation. Required for centrosome positioning and centrosome-dependent exit from mitosis. Plays a role in terminal erythroid differentiation. Inhibits podocyte motility via regulation of actin cytoskeletal dynamics and phosphorylation of CFL1. Promotes keratinocyte terminal differentiation. Involved in osteoblast compaction through the fibronectin fibrillogenesis cell-mediated matrix assembly process, essential for osteoblast mineralization. May regulate closure of the eyelids and ventral body wall by inducing the assembly of actomyosin bundles. This Mus musculus (Mouse) protein is Rho-associated protein kinase 1 (Rock1).